Here is a 389-residue protein sequence, read N- to C-terminus: MDTAKVEPPQETKKTILTAQTPLSMSISSLPDEIVLSFLALISKSYYRSLSLVSKSFYSLLSSTEIYAARSHIGATEPCPYVCLWLPKKHRWFTLAEIEGKLSLEPVRLSSSYPRTRVNSTTVAAGTEIYKIGGTVKGKRSRAVFVLDCWTHRWRRAPNMRVSRVGAKSCFLDGNIYVIGGCRKSEEESMNCGEVFDLKTQTWNPLPSPSVNYAVHSNHKVAVSGERLYVITKRNNYAYDPNEGRWLPDVGSVDLQPITGPWSGGIEKVMKPITGRPWKYTWYSSSHRAWQRVMGLDVLYDKRGCGYRTIQLVNYGGKLLIIWSEWIMILDGYSLIRSQEKEIWCAVIRLEERMSYFGPQIWGEVESCNVVVPSVPKSYQLSSCQCVSV.

One can recognise an F-box domain in the interval serine 24–arginine 70. Kelch repeat units follow at residues glutamate 128–glycine 174, isoleucine 176–glycine 225, and arginine 227–isoleucine 273.

The polypeptide is Putative F-box/kelch-repeat protein At4g35120 (Arabidopsis thaliana (Mouse-ear cress)).